The chain runs to 367 residues: Histidinol-phosphate aminotransferase (367 aa).

Position 230 is an N6-(pyridoxal phosphate)lysine (lysine 230).

The protein belongs to the class-II pyridoxal-phosphate-dependent aminotransferase family. Histidinol-phosphate aminotransferase subfamily. As to quaternary structure, homodimer. It depends on pyridoxal 5'-phosphate as a cofactor.

The enzyme catalyses L-histidinol phosphate + 2-oxoglutarate = 3-(imidazol-4-yl)-2-oxopropyl phosphate + L-glutamate. It participates in amino-acid biosynthesis; L-histidine biosynthesis; L-histidine from 5-phospho-alpha-D-ribose 1-diphosphate: step 7/9. The sequence is that of Histidinol-phosphate aminotransferase from Thermobifida fusca (strain YX).